The primary structure comprises 64 residues: Large ribosomal subunit protein eL37 (64 aa).

4 residues coordinate Zn(2+): Cys20, Cys23, Cys35, and Cys38. The C4-type zinc-finger motif lies at Cys20–Cys38.

This sequence belongs to the eukaryotic ribosomal protein eL37 family. Zn(2+) is required as a cofactor.

Its function is as follows. Binds to the 23S rRNA. This Methanococcus maripaludis (strain DSM 14266 / JCM 13030 / NBRC 101832 / S2 / LL) protein is Large ribosomal subunit protein eL37.